The following is a 269-amino-acid chain: Phosphonoacetaldehyde hydrolase (269 aa).

Asp10 serves as the catalytic Nucleophile. The Mg(2+) site is built by Asp10 and Ala12. Lys52 acts as the Schiff-base intermediate with substrate in catalysis. Asp186 serves as a coordination point for Mg(2+).

It belongs to the HAD-like hydrolase superfamily. PhnX family. In terms of assembly, homodimer. It depends on Mg(2+) as a cofactor.

The enzyme catalyses phosphonoacetaldehyde + H2O = acetaldehyde + phosphate + H(+). Its function is as follows. Involved in phosphonate degradation. This is Phosphonoacetaldehyde hydrolase from Salmonella agona (strain SL483).